Here is a 515-residue protein sequence, read N- to C-terminus: Maturase K (515 aa).

The protein belongs to the intron maturase 2 family. MatK subfamily.

Its subcellular location is the plastid. It is found in the chloroplast. In terms of biological role, usually encoded in the trnK tRNA gene intron. Probably assists in splicing its own and other chloroplast group II introns. This is Maturase K from Pinus yunnanensis (Yunnan pine).